Consider the following 292-residue polypeptide: 4-hydroxy-tetrahydrodipicolinate synthase (292 aa).

T45 serves as a coordination point for pyruvate. The active-site Proton donor/acceptor is Y133. K161 functions as the Schiff-base intermediate with substrate in the catalytic mechanism. Position 203 (I203) interacts with pyruvate.

This sequence belongs to the DapA family. As to quaternary structure, homotetramer; dimer of dimers.

The protein resides in the cytoplasm. It carries out the reaction L-aspartate 4-semialdehyde + pyruvate = (2S,4S)-4-hydroxy-2,3,4,5-tetrahydrodipicolinate + H2O + H(+). Its pathway is amino-acid biosynthesis; L-lysine biosynthesis via DAP pathway; (S)-tetrahydrodipicolinate from L-aspartate: step 3/4. Its function is as follows. Catalyzes the condensation of (S)-aspartate-beta-semialdehyde [(S)-ASA] and pyruvate to 4-hydroxy-tetrahydrodipicolinate (HTPA). The protein is 4-hydroxy-tetrahydrodipicolinate synthase of Erwinia tasmaniensis (strain DSM 17950 / CFBP 7177 / CIP 109463 / NCPPB 4357 / Et1/99).